The sequence spans 298 residues: Cytidine deaminase (298 aa).

CMP/dCMP-type deaminase domains lie at 47–167 (TEQQ…FGPS) and 186–298 (DSDD…PLLG). A substrate-binding site is contributed by 88-90 (NLE). Position 101 (His-101) interacts with Zn(2+). The active-site Proton donor is the Glu-103. Zn(2+)-binding residues include Cys-128 and Cys-131.

This sequence belongs to the cytidine and deoxycytidylate deaminase family. In terms of assembly, homodimer. It depends on Zn(2+) as a cofactor.

The enzyme catalyses cytidine + H2O + H(+) = uridine + NH4(+). The catalysed reaction is 2'-deoxycytidine + H2O + H(+) = 2'-deoxyuridine + NH4(+). Its function is as follows. This enzyme scavenges exogenous and endogenous cytidine and 2'-deoxycytidine for UMP synthesis. The chain is Cytidine deaminase from Shewanella frigidimarina (strain NCIMB 400).